Consider the following 376-residue polypeptide: UDP-N-acetylglucosamine--N-acetylmuramyl-(pentapeptide) pyrophosphoryl-undecaprenol N-acetylglucosamine transferase (376 aa).

Residues 14–16 (TGG), Asn128, Arg169, Ser201, Ile256, and Gln301 contribute to the UDP-N-acetyl-alpha-D-glucosamine site.

It belongs to the glycosyltransferase 28 family. MurG subfamily.

The protein localises to the cell inner membrane. It catalyses the reaction di-trans,octa-cis-undecaprenyl diphospho-N-acetyl-alpha-D-muramoyl-L-alanyl-D-glutamyl-meso-2,6-diaminopimeloyl-D-alanyl-D-alanine + UDP-N-acetyl-alpha-D-glucosamine = di-trans,octa-cis-undecaprenyl diphospho-[N-acetyl-alpha-D-glucosaminyl-(1-&gt;4)]-N-acetyl-alpha-D-muramoyl-L-alanyl-D-glutamyl-meso-2,6-diaminopimeloyl-D-alanyl-D-alanine + UDP + H(+). The protein operates within cell wall biogenesis; peptidoglycan biosynthesis. Its function is as follows. Cell wall formation. Catalyzes the transfer of a GlcNAc subunit on undecaprenyl-pyrophosphoryl-MurNAc-pentapeptide (lipid intermediate I) to form undecaprenyl-pyrophosphoryl-MurNAc-(pentapeptide)GlcNAc (lipid intermediate II). The sequence is that of UDP-N-acetylglucosamine--N-acetylmuramyl-(pentapeptide) pyrophosphoryl-undecaprenol N-acetylglucosamine transferase from Phocaeicola vulgatus (strain ATCC 8482 / DSM 1447 / JCM 5826 / CCUG 4940 / NBRC 14291 / NCTC 11154) (Bacteroides vulgatus).